A 629-amino-acid chain; its full sequence is Chaperone protein HtpG (629 aa).

Residues 1–335 (MSSNPTSSVR…TEDLPLNVSR (335 aa)) form an a; substrate-binding region. Residues 336-547 (ELVQASPVMA…KDALDSQFEK (212 aa)) are b. The tract at residues 548–629 (MMKMMNKDAD…NELVEAATRS (82 aa)) is c.

It belongs to the heat shock protein 90 family. As to quaternary structure, homodimer.

The protein resides in the cytoplasm. In terms of biological role, molecular chaperone. Has ATPase activity. This Chlorobaculum tepidum (strain ATCC 49652 / DSM 12025 / NBRC 103806 / TLS) (Chlorobium tepidum) protein is Chaperone protein HtpG.